The sequence spans 156 residues: Transcription inhibitor protein Gfh1 (156 aa).

Residues methionine 1–isoleucine 74 are a coiled coil.

This sequence belongs to the GreA/GreB family. As to quaternary structure, interacts with RNAP.

Its function is as follows. Inhibits all catalytic activities of RNA polymerase (RNAP) by partially occluding its substrate-binding site and preventing NTP binding. In Thermus thermophilus (strain ATCC BAA-163 / DSM 7039 / HB27), this protein is Transcription inhibitor protein Gfh1 (gfh1).